Here is a 310-residue protein sequence, read N- to C-terminus: N-acetyl-gamma-glutamyl-phosphate reductase (310 aa).

Cys-117 is an active-site residue.

The protein belongs to the NAGSA dehydrogenase family. Type 2 subfamily.

It is found in the cytoplasm. The catalysed reaction is N-acetyl-L-glutamate 5-semialdehyde + phosphate + NADP(+) = N-acetyl-L-glutamyl 5-phosphate + NADPH + H(+). The protein operates within amino-acid biosynthesis; L-arginine biosynthesis; N(2)-acetyl-L-ornithine from L-glutamate: step 3/4. Functionally, catalyzes the NADPH-dependent reduction of N-acetyl-5-glutamyl phosphate to yield N-acetyl-L-glutamate 5-semialdehyde. This is N-acetyl-gamma-glutamyl-phosphate reductase from Brucella ovis (strain ATCC 25840 / 63/290 / NCTC 10512).